We begin with the raw amino-acid sequence, 491 residues long: Cobyric acid synthase (491 aa).

Residues 249-439 form the GATase cobBQ-type domain; it reads PIDIAVIKLP…IHGVFDGVEF (191 aa). Catalysis depends on Cys329, which acts as the Nucleophile. Residue His431 is part of the active site.

The protein belongs to the CobB/CobQ family. CobQ subfamily.

It participates in cofactor biosynthesis; adenosylcobalamin biosynthesis. Functionally, catalyzes amidations at positions B, D, E, and G on adenosylcobyrinic A,C-diamide. NH(2) groups are provided by glutamine, and one molecule of ATP is hydrogenolyzed for each amidation. The protein is Cobyric acid synthase of Clostridium tetani (strain Massachusetts / E88).